A 258-amino-acid polypeptide reads, in one-letter code: MLLTIDVGNSDTVFGLFEGEDLLEHWRVSSKGRRTADEWAVVVQNLLHFDSLIHGDIDGIAMCCTVPMVQNEMRQMFRRHYGDVPAVIVEPGVKTGVPIRMDNPKEVGSDRIVNALAAARLYGGPAVVVDFGTATTFDAVSARGEYVGGAIAPGIDISVEALSKRGAQLHMVEIIKPRSVIAKNTTEALRSGIVYGFAGQVDGIVDRMAQELTDDVDDVTVVATGGLAPLVVDECETVDVHEPWLTLIGLRMIFERNT.

Position 6–13 (Asp6–Val13) interacts with ATP. A substrate-binding site is contributed by Gly108–Arg111. The active-site Proton acceptor is Asp110. Asp130 provides a ligand contact to K(+). Thr133 serves as a coordination point for ATP. Thr185 is a substrate binding site.

Belongs to the type III pantothenate kinase family. In terms of assembly, homodimer. NH4(+) serves as cofactor. The cofactor is K(+).

It localises to the cytoplasm. It carries out the reaction (R)-pantothenate + ATP = (R)-4'-phosphopantothenate + ADP + H(+). It functions in the pathway cofactor biosynthesis; coenzyme A biosynthesis; CoA from (R)-pantothenate: step 1/5. In terms of biological role, catalyzes the phosphorylation of pantothenate (Pan), the first step in CoA biosynthesis. This is Type III pantothenate kinase from Thermobifida fusca (strain YX).